The chain runs to 155 residues: Molybdopterin synthase catalytic subunit 1 (155 aa).

Substrate contacts are provided by residues 101-102, lysine 117, and 124-126; these read HR and KKE.

This sequence belongs to the MoaE family. MOCS2B subfamily. In terms of assembly, heterotetramer; composed of 2 small (MOCS2A) and 2 large (MOCS2B) subunits.

The protein resides in the cytoplasm. The catalysed reaction is 2 [molybdopterin-synthase sulfur-carrier protein]-C-terminal-Gly-aminoethanethioate + cyclic pyranopterin phosphate + H2O = molybdopterin + 2 [molybdopterin-synthase sulfur-carrier protein]-C-terminal Gly-Gly + 2 H(+). Its pathway is cofactor biosynthesis; molybdopterin biosynthesis. Its function is as follows. Catalytic subunit of the molybdopterin synthase complex, a complex that catalyzes the conversion of precursor Z into molybdopterin. Acts by mediating the incorporation of 2 sulfur atoms from thiocarboxylated MOCS2A into precursor Z to generate a dithiolene group. In Aedes aegypti (Yellowfever mosquito), this protein is Molybdopterin synthase catalytic subunit 1.